The chain runs to 429 residues: MDKIRIIGGGSLNGTIPISGAKNAALPLMIAALLSEEKLVLENVPRLADVALLQRILGNHGVDITVNGKRNGDDPHAGQTMEIDARVIVDTTAPYDLVSRMRASFWVVGPLLARMGEARVSLPGGCAIGTRPVDFHLDALRALGADIDIDAGYVVARAPHGLTGARIVFPKVSVGATHTAIMAAALAKGDTVIENAAREPEIVDLADCLIKMGARIEGAGTSTIEISGVPRLRGARHSVLPDRIETGTYAMATAMTGGDVTLAGARADLLESALDVLRKAGAQIDVNNEGIRVRRNGAGIFPVEVSTAPHPGFPTDLQAQLMALMTRAQGRSRITETIFENRFMHVQELARLGANIHLEGDTAIVEGSDRLKGAPVMATDLRASVSLVIAGLAAEGETMIQRVYHLDRGFERLEEKLSRCGAQIERISG.

22-23 provides a ligand contact to phosphoenolpyruvate; that stretch reads KN. Arg102 contacts UDP-N-acetyl-alpha-D-glucosamine. Residue Cys126 is the Proton donor of the active site. At Cys126 the chain carries 2-(S-cysteinyl)pyruvic acid O-phosphothioketal. UDP-N-acetyl-alpha-D-glucosamine is bound by residues 171–174, Asp316, and Ile338; that span reads KVSV.

Belongs to the EPSP synthase family. MurA subfamily.

The protein resides in the cytoplasm. It carries out the reaction phosphoenolpyruvate + UDP-N-acetyl-alpha-D-glucosamine = UDP-N-acetyl-3-O-(1-carboxyvinyl)-alpha-D-glucosamine + phosphate. It participates in cell wall biogenesis; peptidoglycan biosynthesis. Cell wall formation. Adds enolpyruvyl to UDP-N-acetylglucosamine. In Azorhizobium caulinodans (strain ATCC 43989 / DSM 5975 / JCM 20966 / LMG 6465 / NBRC 14845 / NCIMB 13405 / ORS 571), this protein is UDP-N-acetylglucosamine 1-carboxyvinyltransferase.